The sequence spans 185 residues: Ribosome-recycling factor (185 aa).

The disordered stretch occupies residues 144–164 (KEGEAGEDEVGRAEKDLDKTT).

It belongs to the RRF family.

Its subcellular location is the cytoplasm. Its function is as follows. Responsible for the release of ribosomes from messenger RNA at the termination of protein biosynthesis. May increase the efficiency of translation by recycling ribosomes from one round of translation to another. The polypeptide is Ribosome-recycling factor (Mycobacterium tuberculosis (strain CDC 1551 / Oshkosh)).